The following is a 117-amino-acid chain: UPF0102 protein Spro_4337 (117 aa).

Belongs to the UPF0102 family.

The sequence is that of UPF0102 protein Spro_4337 from Serratia proteamaculans (strain 568).